Here is an 89-residue protein sequence, read N- to C-terminus: HssA/B-like protein 14 (89 aa).

This sequence belongs to the hssA/B family.

This Dictyostelium discoideum (Social amoeba) protein is HssA/B-like protein 14 (hssl14).